The following is an 87-amino-acid chain: Selenoprotein W (87 aa).

A cross-link (cysteinyl-selenocysteine (Cys-Sec); redox-active) is located at residues 10–13 (CGAU). Residue Sec-13 is a non-standard amino acid, selenocysteine. Cys-37 carries the S-glutathionyl cysteine modification.

The protein belongs to the SelWTH family. Selenoprotein W subfamily. In terms of assembly, interacts with DPYSL2, PRDX1, YWHAB, YWHAG, HSP70 and HSP90. In terms of tissue distribution, detected in muscle, heart, tongue, brain, lung, spleen, kidney and liver. Highest levels expressed in muscle and heart whereas lowest levels detected in liver (at protein level).

The protein resides in the cytoplasm. In terms of biological role, plays a role as a glutathione (GSH)-dependent antioxidant. May be involved in a redox-related process. May play a role in the myopathies of selenium deficiency. This chain is Selenoprotein W, found in Ovis aries (Sheep).